Here is a 285-residue protein sequence, read N- to C-terminus: Probable enoyl-CoA hydratase echA12 (285 aa).

It belongs to the enoyl-CoA hydratase/isomerase family.

It carries out the reaction a (3S)-3-hydroxyacyl-CoA = a (2E)-enoyl-CoA + H2O. It catalyses the reaction a 4-saturated-(3S)-3-hydroxyacyl-CoA = a (3E)-enoyl-CoA + H2O. Its function is as follows. Could possibly oxidize fatty acids using specific components. This chain is Probable enoyl-CoA hydratase echA12 (echA12), found in Mycobacterium tuberculosis (strain CDC 1551 / Oshkosh).